A 345-amino-acid chain; its full sequence is Protein phosphatase 1 regulatory subunit 7 (345 aa).

Positions 1-53 (MATLSVGEPQEMEVDRRGESEESGDDETKRKSLNGEVDSLQAPSTVPEESPVD) are disordered. Over residues 13-30 (EVDRRGESEESGDDETKR) the composition is skewed to basic and acidic residues. 11 LRR repeats span residues 62-83 (EEED…EVLL), 84-105 (KAKT…ESLV), 106-127 (SLRE…QALT), 128-149 (ELEQ…DSLT), 150-171 (KVKK…DHLT), 172-193 (SLQM…DSLS), 194-215 (SLES…DGLH), 216-237 (NLTV…QNLV), 238-259 (NLRE…ENNK), 260-281 (KLST…SHLT), and 282-303 (DLKE…DELK). Residues 316–345 (NPLQKDPQYRRKIMLALPSVRQIDATFIRF) enclose the LRRCT domain.

The protein belongs to the SDS22 family.

Its subcellular location is the nucleus. Functionally, regulatory subunit of protein phosphatase 1. This is Protein phosphatase 1 regulatory subunit 7 (ppp1r7) from Danio rerio (Zebrafish).